The following is a 56-amino-acid chain: MAVQQNKPSRSKRGMRRAHDALKTSTISVDKTSGKTHLRHHITTDGFYRGYKILKK.

The tract at residues 1-34 is disordered; the sequence is MAVQQNKPSRSKRGMRRAHDALKTSTISVDKTSG.

It belongs to the bacterial ribosomal protein bL32 family.

The sequence is that of Large ribosomal subunit protein bL32 from Baumannia cicadellinicola subsp. Homalodisca coagulata.